The following is a 72-amino-acid chain: Large ribosomal subunit protein bL31 (72 aa).

Residues Cys16, Cys18, Cys37, and Cys40 each coordinate Zn(2+).

The protein belongs to the bacterial ribosomal protein bL31 family. Type A subfamily. As to quaternary structure, part of the 50S ribosomal subunit. Zn(2+) is required as a cofactor.

In terms of biological role, binds the 23S rRNA. The polypeptide is Large ribosomal subunit protein bL31 (Buchnera aphidicola subsp. Schizaphis graminum (strain Sg)).